Here is a 640-residue protein sequence, read N- to C-terminus: Threonine--tRNA ligase (640 aa).

One can recognise a TGS domain in the interval 1-61; it reads MPTITLPDGS…ERDASLQIIT (61 aa). The segment at 242 to 533 is catalytic; it reads DHRRIGKQLD…LIEHYAGAFP (292 aa). 3 residues coordinate Zn(2+): cysteine 333, histidine 384, and histidine 510.

It belongs to the class-II aminoacyl-tRNA synthetase family. In terms of assembly, homodimer. Zn(2+) serves as cofactor.

Its subcellular location is the cytoplasm. It catalyses the reaction tRNA(Thr) + L-threonine + ATP = L-threonyl-tRNA(Thr) + AMP + diphosphate + H(+). Its function is as follows. Catalyzes the attachment of threonine to tRNA(Thr) in a two-step reaction: L-threonine is first activated by ATP to form Thr-AMP and then transferred to the acceptor end of tRNA(Thr). Also edits incorrectly charged L-seryl-tRNA(Thr). This Stutzerimonas stutzeri (strain A1501) (Pseudomonas stutzeri) protein is Threonine--tRNA ligase.